Consider the following 1428-residue polypeptide: DNA polymerase III PolC-type (1428 aa).

Residues 414–570 enclose the Exonuclease domain; it reads FVVFDVETTG…YDAEATGYLL (157 aa).

This sequence belongs to the DNA polymerase type-C family. PolC subfamily.

It is found in the cytoplasm. It carries out the reaction DNA(n) + a 2'-deoxyribonucleoside 5'-triphosphate = DNA(n+1) + diphosphate. Functionally, required for replicative DNA synthesis. This DNA polymerase also exhibits 3' to 5' exonuclease activity. The sequence is that of DNA polymerase III PolC-type from Oceanobacillus iheyensis (strain DSM 14371 / CIP 107618 / JCM 11309 / KCTC 3954 / HTE831).